A 426-amino-acid chain; its full sequence is Tubby protein homolog 1 (426 aa).

The required for localization to cilia in AWB sensory neurons stretch occupies residues 16-28 (QRKMLEDKQKQKR). The interval 19-39 (MLEDKQKQKRHQSAGSVRTTS) is disordered.

This sequence belongs to the TUB family. Interacts with rgb-3. As to expression, expressed in ciliated sensory neurons.

The protein resides in the cytoplasm. The protein localises to the cell projection. It localises to the axon. It is found in the dendrite. Its subcellular location is the cilium. In terms of biological role, has a role in fat regulation independent of daf-16. Implicated in ciliar sensory function which is required for normal sensory behavior such as chemotaxis. Required for extension and growth of sensory neuronal cilia during postembryonic development, potentially via mediating signaling protein transport and localization of PI(4,5)P2 to the ciliary base. Functions in life span control via the insulin/IGF-1 pathway. Thought to be involved in neuronal trafficking. This Caenorhabditis elegans protein is Tubby protein homolog 1.